A 297-amino-acid chain; its full sequence is Cyclin-dependent kinase 1 (297 aa).

The 290-residue stretch at 4-293 (YQKVEKIGEG…AKRALQQNYL (290 aa)) folds into the Protein kinase domain. ATP contacts are provided by residues 10 to 18 (IGEGTYGVV) and lysine 33. Phosphothreonine is present on threonine 14. Tyrosine 15 bears the Phosphotyrosine mark. Aspartate 134 acts as the Proton acceptor in catalysis. Threonine 167 is subject to Phosphothreonine.

This sequence belongs to the protein kinase superfamily. CMGC Ser/Thr protein kinase family. CDC2/CDKX subfamily. Forms a stable but non-covalent complex with regulatory subunit suc1 and with a cyclin. Interacts with cyclin cdc13. Interacts with cyclin cig2. Interacts with cdc37.

It is found in the cytoplasm. It carries out the reaction L-seryl-[protein] + ATP = O-phospho-L-seryl-[protein] + ADP + H(+). The catalysed reaction is L-threonyl-[protein] + ATP = O-phospho-L-threonyl-[protein] + ADP + H(+). With respect to regulation, phosphorylation at Thr-14 or Tyr-15 inactivates the enzyme, while phosphorylation at Thr-167 activates it. In terms of biological role, cyclin-dependent kinase that acts as a master regulator of the mitotic and meiotic cell cycles. Required to drive the G1-S and G2-M transitions, and initiation of premeiotic DNA replication and meiosis II. More than 200 substrates have been identified. Substrate specificity is in part regulated by the bound cyclin protein. When complexed with cyclin cig2, it drives the G1-S phase transition. When complexed with cyclin cdc13, it drives the G2-M transition and initiation of meiosis II. Its activity rises throughout the cell cycle and substrate specificity is further influenced by activity thresholds with more sensitive substrates phosphorylated earlier in the cell cycle than less sensitive substrates. Phosphorylates dis1 during metaphase to ensure proper microtubule dynamics and accurate chromosome segregation. Phosphorylates the repetitive C-terminus of the large subunit of RNA polymerase II rpb1. Inactivated by checkpoint signaling following detection of cellular damage, leading to cell cycle arrest to allow damage repair. Inactivated during G2 DNA damage checkpoint signaling. Inactivated in response to defective RNA splicing. This is Cyclin-dependent kinase 1 from Schizosaccharomyces pombe (strain 972 / ATCC 24843) (Fission yeast).